The chain runs to 315 residues: Transcriptional regulator protein Pur-beta (315 aa).

Positions 1-39 are disordered; sequence MADGDSGSERGGGGPGSFQPAPRGGGGPGGEQETQELAS. N-acetylalanine is present on A2. A phosphoserine mark is found at S6 and S8. R23 is modified (omega-N-methylarginine). The tract at residues 28-254 is DNA-binding; it reads PGGEQETQEL…GVFLRVSEVK (227 aa). Phosphothreonine is present on T34. Residue S104 is modified to Phosphoserine. R155 carries the omega-N-methylarginine modification. The segment at 200 to 220 is disordered; it reads DDELAGGPGGGAGGPGGGLYG. The span at 205–219 shows a compositional bias: gly residues; it reads GGPGGGAGGPGGGLY. An N6-acetyllysine modification is found at K270. Basic and acidic residues predominate over residues 288–298; it reads RQRDKLYERRG. Positions 288-315 are disordered; the sequence is RQRDKLYERRGGGSGGGDESEGEEVDED. R297 bears the Omega-N-methylarginine mark. Phosphoserine occurs at positions 301 and 307. A compositionally biased stretch (acidic residues) spans 305–315; the sequence is DESEGEEVDED.

This sequence belongs to the PUR DNA-binding protein family. As to quaternary structure, homodimer, heterodimer with PURA and heterotrimer with PURA and YBX1/Y-box protein 1. Interacts with MYOCD and SRF. As to expression, expressed in muscle cells and in the liver.

The protein resides in the nucleus. In terms of biological role, transcriptional regulator which can act as an activator or a repressor. Represses the transcription of ACTA2 in fibroblasts and smooth muscle cells via its ability to interact with the purine-rich strand of a MCAT- containing element in the 5' flanking region of the gene. Represses the transcription of MYOCD, capable of repressing all isoforms of MYOCD but the magnitude of the repressive effects is most notable for the SMC- specific isoforms. Promotes hepatic glucose production by activating the transcription of ADCY6, leading to cAMP accumulation, increased PKA activity, CREB activation, and increased transcription of PCK1 and G6PC genes. Has capacity to bind repeated elements in single-stranded DNA such as the purine-rich single strand of the PUR element located upstream of the MYC gene. Participates in transcriptional and translational regulation of alpha-MHC expression in cardiac myocytes by binding to the purine-rich negative regulatory (PNR) element. Modulates constitutive liver galectin-3 gene transcription by binding to its promoter. May play a role in the dendritic transport of a subset of mRNAs. The polypeptide is Transcriptional regulator protein Pur-beta (Purb) (Rattus norvegicus (Rat)).